Here is a 207-residue protein sequence, read N- to C-terminus: Metalloproteinase inhibitor 1 (207 aa).

Positions 1–23 (MAPLAALASSMLLLLWLVAPSRA) are cleaved as a signal peptide. Residue cysteine 24 participates in Zn(2+) binding. The tract at residues 24 to 27 (CTCV) is involved in metalloproteinase-binding. 6 disulfides stabilise this stretch: cysteine 24–cysteine 93, cysteine 26–cysteine 122, cysteine 36–cysteine 147, cysteine 150–cysteine 197, cysteine 155–cysteine 160, and cysteine 168–cysteine 189. The 124-residue stretch at 24–147 (CTCVPPHPQT…GFTKTYAAGC (124 aa)) folds into the NTR domain. N-linked (GlcNAc...) asparagine glycosylation is present at asparagine 53. The tract at residues 90–91 (ES) is involved in metalloproteinase-binding. Residue asparagine 101 is glycosylated (N-linked (GlcNAc...) asparagine). The residue at position 178 (serine 178) is a Phosphoserine.

This sequence belongs to the protease inhibitor I35 (TIMP) family. As to quaternary structure, interacts with MMP1, MMP3, MMP10 and MMP13, but has only very low affinity for MMP14. Interacts with CD63; identified in a complex with CD63 and ITGB1. The activity of TIMP1 is dependent on the presence of disulfide bonds. Post-translationally, N-glycosylated.

The protein localises to the secreted. Metalloproteinase inhibitor that functions by forming one to one complexes with target metalloproteinases, such as collagenases, and irreversibly inactivates them by binding to their catalytic zinc cofactor. Acts on MMP1, MMP2, MMP3, MMP7, MMP8, MMP9, MMP10, MMP11, MMP12, MMP13 and MMP16. Does not act on MMP14. Also functions as a growth factor that regulates cell differentiation, migration and cell death and activates cellular signaling cascades via CD63 and ITGB1. Plays a role in integrin signaling. This is Metalloproteinase inhibitor 1 (TIMP1) from Oryctolagus cuniculus (Rabbit).